The following is a 210-amino-acid chain: Thymidylate kinase (210 aa).

ATP is bound at residue 10-17 (GPEGAGKS).

The protein belongs to the thymidylate kinase family.

It catalyses the reaction dTMP + ATP = dTDP + ADP. Functionally, phosphorylation of dTMP to form dTDP in both de novo and salvage pathways of dTTP synthesis. The protein is Thymidylate kinase of Pseudomonas syringae pv. syringae (strain B728a).